We begin with the raw amino-acid sequence, 189 residues long: dCTP deaminase (189 aa).

Residues 112-117 (KSTYAR), 136-138 (TLE), Q157, Y171, and Q181 contribute to the dCTP site. E138 (proton donor/acceptor) is an active-site residue.

The protein belongs to the dCTP deaminase family. As to quaternary structure, homotrimer.

The catalysed reaction is dCTP + H2O + H(+) = dUTP + NH4(+). Its pathway is pyrimidine metabolism; dUMP biosynthesis; dUMP from dCTP (dUTP route): step 1/2. Its function is as follows. Catalyzes the deamination of dCTP to dUTP. The protein is dCTP deaminase of Burkholderia mallei (strain NCTC 10247).